The sequence spans 387 residues: 4-hydroxy-3-methylbut-2-en-1-yl diphosphate synthase (flavodoxin) (387 aa).

[4Fe-4S] cluster contacts are provided by Cys-280, Cys-283, Cys-315, and Glu-322.

This sequence belongs to the IspG family. Requires [4Fe-4S] cluster as cofactor.

It carries out the reaction (2E)-4-hydroxy-3-methylbut-2-enyl diphosphate + oxidized [flavodoxin] + H2O + 2 H(+) = 2-C-methyl-D-erythritol 2,4-cyclic diphosphate + reduced [flavodoxin]. The protein operates within isoprenoid biosynthesis; isopentenyl diphosphate biosynthesis via DXP pathway; isopentenyl diphosphate from 1-deoxy-D-xylulose 5-phosphate: step 5/6. Converts 2C-methyl-D-erythritol 2,4-cyclodiphosphate (ME-2,4cPP) into 1-hydroxy-2-methyl-2-(E)-butenyl 4-diphosphate. The polypeptide is 4-hydroxy-3-methylbut-2-en-1-yl diphosphate synthase (flavodoxin) (Mycobacterium bovis (strain BCG / Pasteur 1173P2)).